We begin with the raw amino-acid sequence, 507 residues long: Extracellular elastase (507 aa).

The first 28 residues, 1-28, serve as a signal peptide directing secretion; it reads MKNFSKFALTSIAALTVASPLVNTEVDA. Residues 29 to 207 constitute a propeptide that is removed on maturation; it reads KDKVSATQNI…VVDKLNMIKE (179 aa). D347 is a binding site for Ca(2+). H351 contributes to the Zn(2+) binding site. E352 is an active-site residue. The Zn(2+) site is built by H355 and E375. The Ca(2+) site is built by D386, E388, D389, L391, E394, Y397, T398, V401, and D404. The active-site Proton donor is H435.

This sequence belongs to the peptidase M4 family. The cofactor is Ca(2+). Requires Zn(2+) as cofactor.

The protein localises to the secreted. Functionally, protease that has a low substrate specificity. Glucagon is preferentially cleaved between aromatic (Phe) and hydrophobic (Val) amino acids. Hydrolyzes casein and elastin. This is Extracellular elastase (sepA) from Staphylococcus epidermidis (strain ATCC 12228 / FDA PCI 1200).